We begin with the raw amino-acid sequence, 258 residues long: Regulatory protein RecX (258 aa).

Belongs to the RecX family.

It localises to the cytoplasm. Modulates RecA activity. This is Regulatory protein RecX from Streptococcus pyogenes serotype M2 (strain MGAS10270).